The sequence spans 197 residues: Recombination protein RecR (197 aa).

A C4-type zinc finger spans residues 55–70 (CVQCRDFTESEICTIC). In terms of domain architecture, Toprim spans 78-173 (QQLCVVESPA…RPSRLAQGMP (96 aa)).

It belongs to the RecR family.

Its function is as follows. May play a role in DNA repair. It seems to be involved in an RecBC-independent recombinational process of DNA repair. It may act with RecF and RecO. In Xanthomonas axonopodis pv. citri (strain 306), this protein is Recombination protein RecR.